Reading from the N-terminus, the 130-residue chain is Glycoprotein hormone beta-5 (130 aa).

The signal sequence occupies residues 1-24 (MKLAFLFLGPMALLLLAGYGCVLG). Disulfide bonds link cysteine 36–cysteine 84, cysteine 50–cysteine 99, cysteine 60–cysteine 115, cysteine 64–cysteine 117, and cysteine 120–cysteine 127. Residue asparagine 87 is glycosylated (N-linked (GlcNAc...) asparagine).

The protein belongs to the glycoprotein hormones subunit beta family. In terms of assembly, heterodimer with GPHA2; this heterodimer interacts with thyroid-stimulating hormone receptor (TSHR), and hence stimulates cAMP production. N-glycosylated. In terms of tissue distribution, highly expressed in brain and at low levels in pituitary. Also found in retina, testis and skin but not in pancreas, parotid, kidney, stomach, liver, colon, small intestine, thyroid, brain or adrenal gland. In pituitary, colocalizes with ACTH, suggesting that it is located in corticotrophs.

It is found in the secreted. Functionally, functions as a heterodimeric glycoprotein hormone with GPHA2 able to bind and activate the thyroid-stimulating hormone receptor (TSHR), leading to increased cAMP production. Plays a central role in controlling thyroid cell metabolism. This chain is Glycoprotein hormone beta-5 (GPHB5), found in Homo sapiens (Human).